The primary structure comprises 641 residues: Tegument protein UL35 (641 aa).

3 disordered regions span residues glutamate 353–alanine 373, alanine 500–arginine 572, and alanine 587–leucine 641. A compositionally biased stretch (acidic residues) spans glycine 358–aspartate 367. Over residues alanine 500–alanine 563 the composition is skewed to low complexity. Basic residues predominate over residues serine 589–serine 599. A compositionally biased stretch (basic and acidic residues) spans aspartate 632–leucine 641.

The protein belongs to the herpesviridae pp85 family. As to quaternary structure, interacts with UL82. Interacts with isoform UL35A. Interacts with host UBP7; this interaction significantly inhibits the ability of USP7 to form nuclear bodies. Interacts with host DCAF1 (via C-terminus). Interacts with host SNX5; this interaction allows proper gB localization during viral assembly. Interacts with host TBK1; this interaction prevents type I interferon production. Interacts with UL82. Interacts with isoform UL35. Interacts with host UBP7; this interaction significantly inhibits the ability of USP7 to form nuclear bodies. Interacts with host SNX5; this interaction allows proper gB localization during viral assembly.

The protein resides in the virion tegument. It is found in the host nucleus. It localises to the host cytoplasm. In terms of biological role, plays important role in immediate-early gene expression through interaction with UL82. Forms nuclear bodies in host nucleus, independently of PML. In turn, UL35 nuclear bodies associate with and remodel PML bodies. Through interaction with host DCAF1, causes cells to accumulate in the G2 phase of the cell cycle by inducing a DNA damage response. Regulates viral assembly by controlling the localization of the essential gB through regulation of a retrograde transport pathway. This modulation occurs via binding and inhibition of host sorting nexin 5/SNX5. Also plays a role in the inhibition of pattern recognition receptor-mediated type I interferon signaling at the level of TBK1. Functionally, promotes cytoplasmic UL82 accumulation and inhibits UL35-containing nuclear bodies formation. Regulates viral assembly by controlling the localization of the essential gB through regulation of a retrograde transport pathway. This modulation occurs via binding and inhibition of host sorting nexin 5/SNX5. This is Tegument protein UL35 (UL35) from Homo sapiens (Human).